A 146-amino-acid chain; its full sequence is Large ribosomal subunit protein uL15 (146 aa).

Residues 1–10 are compositionally biased toward basic and acidic residues; it reads MTLKLHDLRP. Residues 1-41 are disordered; sequence MTLKLHDLRPARGSKIARTRVGRGDGSKGKTAGRGTKGTRA.

Belongs to the universal ribosomal protein uL15 family. In terms of assembly, part of the 50S ribosomal subunit.

In terms of biological role, binds to the 23S rRNA. In Mycobacterium tuberculosis (strain ATCC 25177 / H37Ra), this protein is Large ribosomal subunit protein uL15.